The sequence spans 734 residues: Photosystem I P700 chlorophyll a apoprotein A2 (734 aa).

Transmembrane regions (helical) follow at residues 46–69, 135–158, 175–199, 273–291, 330–353, 369–395, 417–439, and 517–535; these read IFAS…FHVA, LYTG…LHLQ, LNHH…HVAI, IAHH…GHMY, LHFQ…QHMY, AALY…IFFV, AIIS…LYVH, and FLVH…LILV. [4Fe-4S] cluster contacts are provided by C559 and C568. Helical transmembrane passes span 575–596 and 643–665; these read AFYL…YWHW and LSVW…MFLI. 3 residues coordinate chlorophyll a: H654, M662, and Y670. Position 671 (W671) interacts with phylloquinone. The helical transmembrane segment at 707 to 727 threads the bilayer; that stretch reads LVGLAHFSVGYVLTYAAFLIA.

This sequence belongs to the PsaA/PsaB family. The PsaA/B heterodimer binds the P700 chlorophyll special pair and subsequent electron acceptors. PSI consists of a core antenna complex that captures photons, and an electron transfer chain that converts photonic excitation into a charge separation. The eukaryotic PSI reaction center is composed of at least 11 subunits. The cofactor is P700 is a chlorophyll a/chlorophyll a' dimer, A0 is one or more chlorophyll a, A1 is one or both phylloquinones and FX is a shared 4Fe-4S iron-sulfur center..

It is found in the plastid. Its subcellular location is the chloroplast thylakoid membrane. The catalysed reaction is reduced [plastocyanin] + hnu + oxidized [2Fe-2S]-[ferredoxin] = oxidized [plastocyanin] + reduced [2Fe-2S]-[ferredoxin]. Functionally, psaA and PsaB bind P700, the primary electron donor of photosystem I (PSI), as well as the electron acceptors A0, A1 and FX. PSI is a plastocyanin-ferredoxin oxidoreductase, converting photonic excitation into a charge separation, which transfers an electron from the donor P700 chlorophyll pair to the spectroscopically characterized acceptors A0, A1, FX, FA and FB in turn. Oxidized P700 is reduced on the lumenal side of the thylakoid membrane by plastocyanin. The polypeptide is Photosystem I P700 chlorophyll a apoprotein A2 (Chlorokybus atmophyticus (Soil alga)).